A 275-amino-acid chain; its full sequence is 2,3,4,5-tetrahydropyridine-2,6-dicarboxylate N-succinyltransferase (275 aa).

Positions 106 and 143 each coordinate substrate.

It belongs to the transferase hexapeptide repeat family. As to quaternary structure, homotrimer.

The protein resides in the cytoplasm. The enzyme catalyses (S)-2,3,4,5-tetrahydrodipicolinate + succinyl-CoA + H2O = (S)-2-succinylamino-6-oxoheptanedioate + CoA. It functions in the pathway amino-acid biosynthesis; L-lysine biosynthesis via DAP pathway; LL-2,6-diaminopimelate from (S)-tetrahydrodipicolinate (succinylase route): step 1/3. The polypeptide is 2,3,4,5-tetrahydropyridine-2,6-dicarboxylate N-succinyltransferase (Burkholderia ambifaria (strain ATCC BAA-244 / DSM 16087 / CCUG 44356 / LMG 19182 / AMMD) (Burkholderia cepacia (strain AMMD))).